A 182-amino-acid polypeptide reads, in one-letter code: UPF0397 protein SPH_0594 (182 aa).

The next 5 helical transmembrane spans lie at 10-30 (VVAV…NIPT), 46-66 (LLSI…GHAI), 73-93 (YGLW…VGLF), 109-129 (ILIF…VLAP), and 148-168 (IVAG…LLLA).

It belongs to the UPF0397 family.

It localises to the cell membrane. The protein is UPF0397 protein SPH_0594 of Streptococcus pneumoniae (strain Hungary19A-6).